We begin with the raw amino-acid sequence, 235 residues long: Octanoyltransferase (235 aa).

One can recognise a BPL/LPL catalytic domain in the interval 37–220 (AGGPDTLLLL…AVNDALDGWL (184 aa)). Substrate-binding positions include 78-85 (RGGKITWH), 150-152 (AIG), and 163-165 (GFA). The active-site Acyl-thioester intermediate is the cysteine 181.

This sequence belongs to the LipB family.

It localises to the cytoplasm. It carries out the reaction octanoyl-[ACP] + L-lysyl-[protein] = N(6)-octanoyl-L-lysyl-[protein] + holo-[ACP] + H(+). It participates in protein modification; protein lipoylation via endogenous pathway; protein N(6)-(lipoyl)lysine from octanoyl-[acyl-carrier-protein]: step 1/2. Catalyzes the transfer of endogenously produced octanoic acid from octanoyl-acyl-carrier-protein onto the lipoyl domains of lipoate-dependent enzymes. Lipoyl-ACP can also act as a substrate although octanoyl-ACP is likely to be the physiological substrate. The polypeptide is Octanoyltransferase (Mycobacterium leprae (strain Br4923)).